A 691-amino-acid polypeptide reads, in one-letter code: Amino-acid acetyltransferase, mitochondrial (691 aa).

Residues Met1 to Lys27 show a composition bias toward polar residues. Disordered regions lie at residues Met1–Tyr29 and Arg65–Val95. The segment covering Gln75–Ala87 has biased composition (basic and acidic residues). The N-acetyltransferase domain occupies Asn512 to Pro681.

This sequence belongs to the acetyltransferase family.

The protein localises to the mitochondrion. The enzyme catalyses L-glutamate + acetyl-CoA = N-acetyl-L-glutamate + CoA + H(+). It functions in the pathway amino-acid biosynthesis; L-arginine biosynthesis; N(2)-acetyl-L-ornithine from L-glutamate: step 1/4. In terms of biological role, N-acetylglutamate synthase involved in arginine biosynthesis. This chain is Amino-acid acetyltransferase, mitochondrial (arg2), found in Aspergillus terreus (strain NIH 2624 / FGSC A1156).